We begin with the raw amino-acid sequence, 473 residues long: Fumarate hydratase class II (473 aa).

Residues 105 to 107 (SGT), 130 to 133 (HPND), 140 to 142 (SSN), and Thr-188 each bind substrate. The active-site Proton donor/acceptor is His-189. Ser-319 is a catalytic residue. Substrate contacts are provided by residues Ser-320 and 325–327 (KVN).

Belongs to the class-II fumarase/aspartase family. Fumarase subfamily. In terms of assembly, homotetramer.

It is found in the cytoplasm. The catalysed reaction is (S)-malate = fumarate + H2O. The protein operates within carbohydrate metabolism; tricarboxylic acid cycle; (S)-malate from fumarate: step 1/1. Its function is as follows. Involved in the TCA cycle. Catalyzes the stereospecific interconversion of fumarate to L-malate. This Xylella fastidiosa (strain Temecula1 / ATCC 700964) protein is Fumarate hydratase class II.